The sequence spans 142 residues: Large-conductance mechanosensitive channel (142 aa).

Helical transmembrane passes span Val-19–Val-39, Pro-41–Gly-61, and Phe-78–Phe-98.

Belongs to the MscL family. In terms of assembly, homopentamer.

Its subcellular location is the cell inner membrane. Its function is as follows. Channel that opens in response to stretch forces in the membrane lipid bilayer. May participate in the regulation of osmotic pressure changes within the cell. This chain is Large-conductance mechanosensitive channel, found in Roseobacter denitrificans (strain ATCC 33942 / OCh 114) (Erythrobacter sp. (strain OCh 114)).